A 316-amino-acid polypeptide reads, in one-letter code: Glutathione synthetase (316 aa).

One can recognise an ATP-grasp domain in the interval Asn124–Glu311. Phe151–Gly208 contributes to the ATP binding site. 2 residues coordinate Mg(2+): Glu282 and Asn284.

It belongs to the prokaryotic GSH synthase family. Mg(2+) is required as a cofactor. It depends on Mn(2+) as a cofactor.

It carries out the reaction gamma-L-glutamyl-L-cysteine + glycine + ATP = glutathione + ADP + phosphate + H(+). Its pathway is sulfur metabolism; glutathione biosynthesis; glutathione from L-cysteine and L-glutamate: step 2/2. The sequence is that of Glutathione synthetase from Xanthomonas axonopodis pv. citri (strain 306).